The following is a 621-amino-acid chain: Very-long-chain aldehyde decarbonylase GL1-5 (621 aa).

Helical transmembrane passes span 99 to 119 (IILS…GQHL), 126 to 146 (GAGL…YWFH), 186 to 206 (LLFS…IIAF), 224 to 244 (FELV…LMYT), and 332 to 352 (MWPL…SFTV). Residues 138-272 (VEFLYYWFHR…MPFYDYIYNT (135 aa)) form the Fatty acid hydroxylase domain.

This sequence belongs to the sterol desaturase family. In terms of assembly, homodimer.

Its subcellular location is the endoplasmic reticulum membrane. The catalysed reaction is a long-chain fatty aldehyde + 2 NADPH + O2 + H(+) = a long-chain alkane + formate + 2 NADP(+) + H2O. Aldehyde decarbonylase involved in the conversion of aldehydes to alkanes. Core component of a very-long-chain alkane synthesis complex. This is Very-long-chain aldehyde decarbonylase GL1-5 from Oryza sativa subsp. indica (Rice).